Here is a 141-residue protein sequence, read N- to C-terminus: Large ribosomal subunit protein uL16 (141 aa).

A disordered region spans residues 1–23; that stretch reads MLMPKRTKYRKQMKGRNRGKAHR.

The protein belongs to the universal ribosomal protein uL16 family. As to quaternary structure, part of the 50S ribosomal subunit.

In terms of biological role, binds 23S rRNA and is also seen to make contacts with the A and possibly P site tRNAs. In Helicobacter acinonychis (strain Sheeba), this protein is Large ribosomal subunit protein uL16.